We begin with the raw amino-acid sequence, 154 residues long: MSELCPCGSILNYHECCGPYILGTQVAAKPAILMRSRYCAYVEKNVDYLIATWHPDCHAQEWRESIIQGFTKTVWHGLTVIAETPGRHPDEAFVEFIARFTDADNAQITAMHERSRFLRIKEHWYYIDGIRPSLGRNDTCLCGSGKKHKKCCGR.

Belongs to the UPF0225 family.

This chain is UPF0225 protein YPDSF_0962, found in Yersinia pestis (strain Pestoides F).